A 58-amino-acid chain; its full sequence is Large ribosomal subunit protein bL32 (58 aa).

The segment at 1-23 (MAVPARHTSSAKKNRRRTHYKLT) is disordered. Over residues 9 to 20 (SSAKKNRRRTHY) the composition is skewed to basic residues.

It belongs to the bacterial ribosomal protein bL32 family.

This Lactococcus lactis subsp. cremoris (Streptococcus cremoris) protein is Large ribosomal subunit protein bL32 (rpmF).